We begin with the raw amino-acid sequence, 513 residues long: Maturase K (513 aa).

This sequence belongs to the intron maturase 2 family. MatK subfamily.

The protein localises to the plastid. It localises to the chloroplast. Its function is as follows. Usually encoded in the trnK tRNA gene intron. Probably assists in splicing its own and other chloroplast group II introns. This chain is Maturase K, found in Zea mays (Maize).